A 99-amino-acid chain; its full sequence is High mobility group nucleosome-binding domain-containing protein 3 (99 aa).

Composition is skewed to basic and acidic residues over residues 1–25, 39–53, and 62–72; these read MPKR…EPTR, PEPK…KEPG, and GKKEEKQEAGK. The interval 1-99 is disordered; sequence MPKRKSPENT…KTESVDNEGE (99 aa). Phosphoserine is present on serine 6. Threonine 10 is modified (phosphothreonine). A phosphoserine mark is found at serine 78 and serine 93. Over residues 81-93 the composition is skewed to basic and acidic residues; it reads GETKAEEAQKTES.

The protein belongs to the HMGN family. As to quaternary structure, interacts with the ligand binding domain of the thyroid receptor (TR) (in vitro). Requires the presence of thyroid hormone for its interaction. Interacts with transcriptional regulator SEHBP. Interacts with nucleosomes.

It localises to the nucleus. Its function is as follows. Binds to nucleosomes, regulating chromatin structure and consequently, chromatin-dependent processes such as transcription, DNA replication and DNA repair. Affects both insulin and glucagon levels and modulates the expression of pancreatic genes involved in insulin secretion. Regulates the expression of the glucose transporter SLC2A2 by binding specifically to its promoter region and recruiting PDX1 and additional transcription factors. Regulates the expression of SLC6A9, a glycine transporter which regulates the glycine concentration in synaptic junctions in the central nervous system, by binding to its transcription start site. May play a role in ocular development and astrocyte function. This is High mobility group nucleosome-binding domain-containing protein 3 (HMGN3) from Pongo abelii (Sumatran orangutan).